We begin with the raw amino-acid sequence, 243 residues long: Small ribosomal subunit protein uS2 (243 aa).

This sequence belongs to the universal ribosomal protein uS2 family.

The polypeptide is Small ribosomal subunit protein uS2 (Chromobacterium violaceum (strain ATCC 12472 / DSM 30191 / JCM 1249 / CCUG 213 / NBRC 12614 / NCIMB 9131 / NCTC 9757 / MK)).